The primary structure comprises 226 residues: Teichuronic acid biosynthesis protein TuaF (226 aa).

Helical transmembrane passes span 15-35 (NIIW…ILPS) and 202-222 (VLGV…PEFF).

The protein resides in the cell membrane. It participates in cell wall biogenesis; teichuronic acid biosynthesis. This chain is Teichuronic acid biosynthesis protein TuaF (tuaF), found in Bacillus subtilis (strain 168).